The primary structure comprises 73 residues: UPF0235 protein SYO3AOP1_0257 (73 aa).

The protein belongs to the UPF0235 family.

The polypeptide is UPF0235 protein SYO3AOP1_0257 (Sulfurihydrogenibium sp. (strain YO3AOP1)).